The chain runs to 439 residues: uncharacterized protein (439 aa).

Residues 1-55 (MLEQVRIQKMVNGGYGLAHLSNGKVVLVEGAYPGEEVLIKTYREKRDFSFGKVVS) enclose the TRAM domain. Residues cysteine 68, cysteine 74, cysteine 77, and cysteine 149 each contribute to the [4Fe-4S] cluster site. S-adenosyl-L-methionine is bound by residues glutamine 272, tyrosine 301, glutamate 322, and aspartate 367. Residue cysteine 394 is the Nucleophile of the active site.

Belongs to the class I-like SAM-binding methyltransferase superfamily. RNA M5U methyltransferase family.

This is an uncharacterized protein from Thermotoga maritima (strain ATCC 43589 / DSM 3109 / JCM 10099 / NBRC 100826 / MSB8).